Reading from the N-terminus, the 390-residue chain is Leu/Ile/Val-binding protein homolog 6 (390 aa).

The signal sequence occupies residues 1 to 21 (MKKIALTALAVFSLAASAAYA).

It belongs to the leucine-binding protein family.

Functionally, component of an amino-acid transport system. This is Leu/Ile/Val-binding protein homolog 6 from Brucella abortus (strain 2308).